Reading from the N-terminus, the 1486-residue chain is Chromosome partition protein MukB (1486 aa).

34–41 is a binding site for ATP; that stretch reads GGNGAGKS. 3 coiled-coil regions span residues 326–418, 444–480, and 509–603; these read LEAD…QYNQ, LETF…QAYQ, and RHLA…RAPV. Residues 666–783 are flexible hinge; it reads PGGSEDQRLN…EVPLFGRAAR (118 aa). Coiled-coil stretches lie at residues 835-923, 977-1115, and 1209-1266; these read EAEI…AKLE, EMLS…TAKA, and VEAI…QNVS.

Belongs to the SMC family. MukB subfamily. As to quaternary structure, homodimerization via its hinge domain. Binds to DNA via its C-terminal region. Interacts, and probably forms a ternary complex, with MukE and MukF via its C-terminal region. The complex formation is stimulated by calcium or magnesium. Interacts with tubulin-related protein FtsZ.

Its subcellular location is the cytoplasm. It localises to the nucleoid. Its function is as follows. Plays a central role in chromosome condensation, segregation and cell cycle progression. Functions as a homodimer, which is essential for chromosome partition. Involved in negative DNA supercoiling in vivo, and by this means organize and compact chromosomes. May achieve or facilitate chromosome segregation by condensation DNA from both sides of a centrally located replisome during cell division. The polypeptide is Chromosome partition protein MukB (Escherichia coli O6:K15:H31 (strain 536 / UPEC)).